Consider the following 426-residue polypeptide: Tol-Pal system protein TolB (426 aa).

Residues 1–25 (MNILLSRFRLLLAAALAALSWGAQA) form the signal peptide.

The protein belongs to the TolB family. As to quaternary structure, the Tol-Pal system is composed of five core proteins: the inner membrane proteins TolA, TolQ and TolR, the periplasmic protein TolB and the outer membrane protein Pal. They form a network linking the inner and outer membranes and the peptidoglycan layer.

The protein resides in the periplasm. Its function is as follows. Part of the Tol-Pal system, which plays a role in outer membrane invagination during cell division and is important for maintaining outer membrane integrity. The protein is Tol-Pal system protein TolB of Aromatoleum aromaticum (strain DSM 19018 / LMG 30748 / EbN1) (Azoarcus sp. (strain EbN1)).